Here is a 248-residue protein sequence, read N- to C-terminus: Adenosylcobinamide-GDP ribazoletransferase (248 aa).

5 helical membrane passes run 30–50 (LAESFSFFPLVGLILGFCYAL), 54–74 (VLSGVVPSLLLAVAITALTAV), 112–132 (FGALAIALAVAFKVAALDAVI), 134–154 (AGSFLPLLLVPVVSRLAMVLA), and 188–208 (AVSAFLVQPVFGLCALVLAAG).

It belongs to the CobS family. Requires Mg(2+) as cofactor.

The protein resides in the cell inner membrane. The catalysed reaction is alpha-ribazole + adenosylcob(III)inamide-GDP = adenosylcob(III)alamin + GMP + H(+). The enzyme catalyses alpha-ribazole 5'-phosphate + adenosylcob(III)inamide-GDP = adenosylcob(III)alamin 5'-phosphate + GMP + H(+). It functions in the pathway cofactor biosynthesis; adenosylcobalamin biosynthesis; adenosylcobalamin from cob(II)yrinate a,c-diamide: step 7/7. In terms of biological role, joins adenosylcobinamide-GDP and alpha-ribazole to generate adenosylcobalamin (Ado-cobalamin). Also synthesizes adenosylcobalamin 5'-phosphate from adenosylcobinamide-GDP and alpha-ribazole 5'-phosphate. The sequence is that of Adenosylcobinamide-GDP ribazoletransferase from Syntrophobacter fumaroxidans (strain DSM 10017 / MPOB).